The chain runs to 500 residues: ATP synthase subunit alpha (500 aa).

Gly-169–Thr-176 contributes to the ATP binding site.

This sequence belongs to the ATPase alpha/beta chains family. In terms of assembly, F-type ATPases have 2 components, CF(1) - the catalytic core - and CF(0) - the membrane proton channel. CF(1) has five subunits: alpha(3), beta(3), gamma(1), delta(1), epsilon(1). CF(0) has three main subunits: a(1), b(2) and c(9-12). The alpha and beta chains form an alternating ring which encloses part of the gamma chain. CF(1) is attached to CF(0) by a central stalk formed by the gamma and epsilon chains, while a peripheral stalk is formed by the delta and b chains.

The protein resides in the cell membrane. It carries out the reaction ATP + H2O + 4 H(+)(in) = ADP + phosphate + 5 H(+)(out). Produces ATP from ADP in the presence of a proton gradient across the membrane. The alpha chain is a regulatory subunit. This is ATP synthase subunit alpha from Lactococcus lactis subsp. lactis (strain IL1403) (Streptococcus lactis).